A 407-amino-acid polypeptide reads, in one-letter code: Eukaryotic initiation factor 4A-II (407 aa).

Residues 1-22 (MSGGSADYNREHGGPEGMDPDG) are disordered. Positions 33 to 61 (DNFDDMNLKESLLRGIYAYGFEKPSAIQQ) match the Q motif motif. Residues 64–235 (IIPCIKGYDV…KKFMRDPIRI (172 aa)) enclose the Helicase ATP-binding domain. Residue 77–84 (AQSGTGKT) coordinates ATP. Thr159 carries the phosphothreonine modification. Residues 183 to 186 (DEAD) carry the DEAD box motif. Positions 246–407 (GIKQFYINVE…EMPMNVADLI (162 aa)) constitute a Helicase C-terminal domain.

The protein belongs to the DEAD box helicase family. eIF4A subfamily. EIF4F is a multi-subunit complex, the composition of which varies with external and internal environmental conditions. It is composed of at least EIF4A, EIF4E and EIF4G1/EIFFG3. Interacts with EIF4E. May interact with NOM1.

The catalysed reaction is ATP + H2O = ADP + phosphate + H(+). Functionally, ATP-dependent RNA helicase which is a subunit of the eIF4F complex involved in cap recognition and is required for mRNA binding to ribosome. In the current model of translation initiation, eIF4A unwinds RNA secondary structures in the 5'-UTR of mRNAs which is necessary to allow efficient binding of the small ribosomal subunit, and subsequent scanning for the initiator codon. The polypeptide is Eukaryotic initiation factor 4A-II (EIF4A2) (Bos taurus (Bovine)).